A 112-amino-acid chain; its full sequence is Photosystem II reaction center Psb28 protein (112 aa).

The protein belongs to the Psb28 family. Part of the photosystem II complex.

It localises to the cellular thylakoid membrane. This is Photosystem II reaction center Psb28 protein from Synechocystis sp. (strain ATCC 27184 / PCC 6803 / Kazusa).